The following is a 119-amino-acid chain: Putative ankyrin repeat domain-containing protein 26-like 1 (119 aa).

A coiled-coil region spans residues 15–112; the sequence is EKEEDLLHKN…EKQSRQRLTK (98 aa).

In Homo sapiens (Human), this protein is Putative ankyrin repeat domain-containing protein 26-like 1 (ANKRD36BP1).